The sequence spans 224 residues: UPF0173 metal-dependent hydrolase STH3160 (224 aa).

This sequence belongs to the UPF0173 family.

The protein is UPF0173 metal-dependent hydrolase STH3160 of Symbiobacterium thermophilum (strain DSM 24528 / JCM 14929 / IAM 14863 / T).